The chain runs to 309 residues: Methionyl-tRNA formyltransferase (309 aa).

109–112 (SLLP) contacts (6S)-5,6,7,8-tetrahydrofolate.

Belongs to the Fmt family.

The catalysed reaction is L-methionyl-tRNA(fMet) + (6R)-10-formyltetrahydrofolate = N-formyl-L-methionyl-tRNA(fMet) + (6S)-5,6,7,8-tetrahydrofolate + H(+). In terms of biological role, attaches a formyl group to the free amino group of methionyl-tRNA(fMet). The formyl group appears to play a dual role in the initiator identity of N-formylmethionyl-tRNA by promoting its recognition by IF2 and preventing the misappropriation of this tRNA by the elongation apparatus. The polypeptide is Methionyl-tRNA formyltransferase (Chloroflexus aggregans (strain MD-66 / DSM 9485)).